The following is a 262-amino-acid chain: Kallikrein-1 (262 aa).

An N-terminal signal peptide occupies residues 1 to 18 (MWFLVLCLALSLGGTGAA). A propeptide spans 19–24 (PPIQSR) (activation peptide). Positions 25–259 (IVGGWECEQH…YVKWIEDTIA (235 aa)) constitute a Peptidase S1 domain. 5 disulfides stabilise this stretch: Cys31–Cys174, Cys50–Cys66, Cys153–Cys220, Cys185–Cys199, and Cys210–Cys235. Residue His65 is the Charge relay system of the active site. The O-linked (GalNAc...) serine glycan is linked to Ser93. An N-linked (GlcNAc...) asparagine glycan is attached at Asn102. Ser104 carries O-linked (GalNAc...) serine glycosylation. Asn108 is a glycosylation site (N-linked (GlcNAc...) asparagine). Asp120 functions as the Charge relay system in the catalytic mechanism. An N-linked (GlcNAc...) asparagine; partial glycan is attached at Asn165. Ser167 carries an O-linked (GalNAc...) serine glycan. The active-site Charge relay system is Ser214.

The protein belongs to the peptidase S1 family. Kallikrein subfamily. Post-translationally, the O-linked polysaccharides on Ser-93, Ser-104 and Ser-167 are probably the mucin type linked to GalNAc. In PubMed:3163150, GalNAc was detected with the corresponding peptides but not located. As to expression, isoform 2 is expressed in pancreas, salivary glands, kidney, colon, prostate gland, testis, spleen and the colon adenocarcinoma cell line T84.

It catalyses the reaction Preferential cleavage of Arg-|-Xaa bonds in small molecule substrates. Highly selective action to release kallidin (lysyl-bradykinin) from kininogen involves hydrolysis of Met-|-Xaa or Leu-|-Xaa.. Functionally, glandular kallikreins cleave Met-Lys and Arg-Ser bonds in kininogen to release Lys-bradykinin. In terms of biological role, (Microbial infection) Cleaves Neisseria meningitidis NHBA in saliva; Neisseria is an obligate commensal of the nasopharyngeal mucosa. In Homo sapiens (Human), this protein is Kallikrein-1 (KLK1).